A 129-amino-acid polypeptide reads, in one-letter code: Succinate dehydrogenase cytochrome b556 subunit (129 aa).

Over 1–26 the chain is Cytoplasmic; it reads MIRNVKKQRPVNLDLQTIRFPITAIA. A helical membrane pass occupies residues 27–52; the sequence is SILHRVSGVITFIAVGILLWLLGTSL. Residues 53-68 are Periplasmic-facing; that stretch reads SSPEGFQQAADIMDGF. Residues 69–89 traverse the membrane as a helical segment; it reads IVKFIMWGILTALAYHVIVGI. Residue H84 coordinates heme. At 90–108 the chain is on the cytoplasmic side; that stretch reads RHMLMDFGYLEETFEAGQR. The chain crosses the membrane as a helical span at residues 109–129; that stretch reads SAKISFVITVVLSLLAGVLVW.

It belongs to the cytochrome b560 family. Part of an enzyme complex containing four subunits: a flavoprotein, an iron-sulfur protein, plus two membrane-anchoring proteins, SdhC and SdhD. The complex can form homotrimers. It depends on heme as a cofactor.

It localises to the cell inner membrane. It participates in carbohydrate metabolism; tricarboxylic acid cycle. In terms of biological role, membrane-anchoring subunit of succinate dehydrogenase (SDH). The protein is Succinate dehydrogenase cytochrome b556 subunit (sdhC) of Salmonella typhi.